A 171-amino-acid chain; its full sequence is Inosine/xanthosine triphosphatase (171 aa).

8 to 13 lines the substrate pocket; sequence TTNPAK. Mg(2+) contacts are provided by Glu38 and Glu68. 68-69 contributes to the substrate binding site; the sequence is EA.

It belongs to the YjjX NTPase family. Homodimer. Requires Mg(2+) as cofactor. It depends on Mn(2+) as a cofactor.

It carries out the reaction XTP + H2O = XDP + phosphate + H(+). It catalyses the reaction ITP + H2O = IDP + phosphate + H(+). In terms of biological role, phosphatase that hydrolyzes non-canonical purine nucleotides such as XTP and ITP to their respective diphosphate derivatives. Probably excludes non-canonical purines from DNA/RNA precursor pool, thus preventing their incorporation into DNA/RNA and avoiding chromosomal lesions. In Salmonella arizonae (strain ATCC BAA-731 / CDC346-86 / RSK2980), this protein is Inosine/xanthosine triphosphatase (yjjX).